The chain runs to 1785 residues: BCL-6 corepressor-like protein 1 (1785 aa).

3 disordered regions span residues 65–101 (VGSG…KMDY), 113–137 (VPLS…NSRA), and 343–368 (ASTP…GPPS). The span at 83–97 (KLGHKSEDKPDDPQP) shows a compositional bias: basic and acidic residues. Ser-496 bears the Phosphoserine mark. 2 stretches are compositionally biased toward polar residues: residues 527–539 (PCTS…TTQP) and 586–600 (GTEQ…TFSP). 2 disordered regions span residues 527-550 (PCTS…PLAD) and 562-646 (PTPQ…PMPV). Phosphoserine occurs at positions 599 and 613. Residue Lys-747 forms a Glycyl lysine isopeptide (Lys-Gly) (interchain with G-Cter in SUMO2) linkage. 3 disordered regions span residues 753–781 (IIDQ…QPST), 876–901 (SSSE…EQDP), and 937–977 (VQPS…LKLA). Phosphoserine occurs at positions 1029 and 1033. Residue Lys-1092 forms a Glycyl lysine isopeptide (Lys-Gly) (interchain with G-Cter in SUMO2) linkage. Disordered regions lie at residues 1107–1293 (PDDV…QGRR) and 1312–1487 (WDTN…PEAR). Phosphoserine is present on Ser-1162. Positions 1176–1185 (VRGKHKHRKP) are enriched in basic residues. Residues 1195–1213 (KRADSHEEGSLEKKAKSSF) are compositionally biased toward basic and acidic residues. Residues 1222–1234 (STRTRSQSGSICS) are compositionally biased toward polar residues. Over residues 1271-1284 (TQRDTQYRSHHAQD) the composition is skewed to basic and acidic residues. A compositionally biased stretch (acidic residues) spans 1314–1324 (TNEEEEEEEEE). Positions 1328–1336 (KRKKRRRQK) match the Nuclear localization signal motif. A compositionally biased stretch (basic residues) spans 1328 to 1339 (KRKKRRRQKSRK). A compositionally biased stretch (basic and acidic residues) spans 1352–1363 (EQRRKGRADLKA). Residues 1440–1449 (WSQQKTRSPK) are compositionally biased toward polar residues. Residues 1461 to 1480 (TPSKSRSASSEEASESPTAR) are compositionally biased toward low complexity. At Ser-1476 the chain carries Phosphoserine. ANK repeat units lie at residues 1529-1558 (AGYT…NVNC), 1562-1591 (DGTR…DPTL), and 1595-1623 (SGQT…QGRA). Residues 1668 to 1785 (DDFMFELSDK…SEVEFQSCNS (118 aa)) are PCGF Ub-like fold domain (PUFD); required for the interaction with the KDM2B-SKP1 heterodimeric complex.

The protein belongs to the BCOR family. Interacts with PCGF1, forming heterodimers. The PCGF1-BCORL1 heterodimeric complex interacts with the KDM2B-SKP1 heterodimeric complex to form a homotetrameric polycomb repression complex 1 (PRC1.1). Interacts with SKP1. Interacts with CTBP1, HDAC4, HDAC5 and HDAC7. Detected in testis and prostate. Detected at lower levels in peripheral blood leukocytes and spleen. Mainly expressed in the spermatogonia and primary spermatocytes.

It is found in the nucleus. Transcriptional corepressor. May specifically inhibit gene expression when recruited to promoter regions by sequence-specific DNA-binding proteins such as BCL6. This repression may be mediated at least in part by histone deacetylase activities which can associate with this corepressor. In Homo sapiens (Human), this protein is BCL-6 corepressor-like protein 1.